The primary structure comprises 241 residues: Venom nerve growth factor 2 (241 aa).

Residues 1 to 18 (MSMLCYTLITAFLIGIWA) form the signal peptide. Residues 19 to 125 (APKSEDNVPL…SLNRNIRAKR (107 aa)) constitute a propeptide that is removed on maturation. Positions 47-67 (GLKTSRNTDQRHPAPQKAEDQ) are disordered. 3 disulfides stabilise this stretch: cysteine 139–cysteine 203, cysteine 181–cysteine 231, and cysteine 191–cysteine 233.

It belongs to the NGF-beta family. Homodimer; non-covalently linked. As to expression, expressed by the venom gland.

The protein localises to the secreted. Nerve growth factor is important for the development and maintenance of the sympathetic and sensory nervous systems. It stimulates division and differentiation of sympathetic and embryonic sensory neurons as well as basal forebrain cholinergic neurons in the brain. Its relevance in the snake venom is not clear. However, it has been shown to inhibit metalloproteinase-dependent proteolysis of platelet glycoprotein Ib alpha, suggesting a metalloproteinase inhibition to prevent metalloprotease autodigestion and/or protection against prey proteases. Binds a lipid between the two protein chains in the homodimer. The lipid-bound form promotes histamine relase from mouse mast cells, contrary to the lipid-free form. In Naja sputatrix (Malayan spitting cobra), this protein is Venom nerve growth factor 2.